Reading from the N-terminus, the 692-residue chain is Elongation factor G (692 aa).

Residues 8-282 enclose the tr-type G domain; sequence AKTRNIGIMA…AVIAYLPSPL (275 aa). GTP-binding positions include 17-24, 81-85, and 135-138; these read AHVDAGKT, DTPGH, and NKMD.

Belongs to the TRAFAC class translation factor GTPase superfamily. Classic translation factor GTPase family. EF-G/EF-2 subfamily.

Its subcellular location is the cytoplasm. Its function is as follows. Catalyzes the GTP-dependent ribosomal translocation step during translation elongation. During this step, the ribosome changes from the pre-translocational (PRE) to the post-translocational (POST) state as the newly formed A-site-bound peptidyl-tRNA and P-site-bound deacylated tRNA move to the P and E sites, respectively. Catalyzes the coordinated movement of the two tRNA molecules, the mRNA and conformational changes in the ribosome. The chain is Elongation factor G from Streptococcus pyogenes serotype M49 (strain NZ131).